We begin with the raw amino-acid sequence, 24 residues long: Unknown protein NF004 from 2D-PAGE (24 aa).

The sequence is that of Unknown protein NF004 from 2D-PAGE from Naegleria fowleri (Brain eating amoeba).